Consider the following 208-residue polypeptide: uncharacterized protein (208 aa).

A signal peptide spans 1-16 (MTRVALLTTGRELSQA). Disordered regions lie at residues 1-95 (MTRV…VRGQ) and 145-176 (RVTK…SAAD). A compositionally biased stretch (low complexity) spans 16-25 (AAPPARARTP). Over residues 32 to 43 (RGERPDDGGHAP) the composition is skewed to basic and acidic residues. Positions 44 to 54 (HRDRRVNQRRR) are enriched in basic residues. Positions 55–95 (QVGDRRAQRGVDEHPWRRPDERPNDHLPQRNSERPEGVRGQ) are enriched in basic and acidic residues. 2 stretches are compositionally biased toward polar residues: residues 148–158 (KVSSSGPNSTP) and 167–176 (GTNNAPSAAD).

This is an uncharacterized protein from Mycobacterium tuberculosis (strain CDC 1551 / Oshkosh).